The primary structure comprises 293 residues: Aromatic amino acid exporter YddG (293 aa).

At 1–6 (MTRQKA) the chain is on the cytoplasmic side. Positions 6 to 137 (ATLIGLIAIV…LALVGVCWVL (132 aa)) constitute an EamA 1 domain. Residues 7–27 (TLIGLIAIVLWSTMVGLIRGV) traverse the membrane as a helical segment. Topologically, residues 28–33 (SEGLGP) are periplasmic. The chain crosses the membrane as a helical span at residues 34–54 (VGGAAAIYSLSGLLLIFTVGF). Over 55–62 (PRIRQIPK) the chain is Cytoplasmic. A helical membrane pass occupies residues 63 to 83 (GYLLAGSLLFVSYEICLALSL). The Periplasmic portion of the chain corresponds to 84–92 (GYAATHHQA). A helical transmembrane segment spans residues 93–113 (IEVGMVNYLWPSLTILFAILF). The Cytoplasmic segment spans residues 114-118 (NGQKT). A helical membrane pass occupies residues 119–139 (NWLIVPGLLLALVGVCWVLGG). Topologically, residues 140 to 155 (DNGLHYDEIINNITTS) are periplasmic. Residues 156–176 (PLSYFLAFIGAFIWAAYCTVT) traverse the membrane as a helical segment. The 128-residue stretch at 158 to 285 (SYFLAFIGAF…ALMVCGGSLL (128 aa)) folds into the EamA 2 domain. The Cytoplasmic segment spans residues 177–182 (NKYARG). The helical transmembrane segment at 183-203 (FNGITVFVLLTGASLWVYYFL) threads the bilayer. At 204–218 (TPQPEMIFSTPVMIK) the chain is on the periplasmic side. Residues 219–239 (LISAAFTLGFAYAAWNVGILH) traverse the membrane as a helical segment. Over 240–243 (GNVT) the chain is Cytoplasmic. The chain crosses the membrane as a helical span at residues 244 to 264 (IMAVGSYFTPVLSSALAAVLL). Over 265–267 (SAP) the chain is Periplasmic. A helical transmembrane segment spans residues 268–288 (LSFSFWQGALMVCGGSLLCWL). Topologically, residues 289–293 (ATRRG) are cytoplasmic.

Belongs to the drug/metabolite transporter (DMT) superfamily. Aromatic amino acid/paraquat exporter (ArAA/P-E) (TC 2.A.7.17) family.

It is found in the cell inner membrane. The enzyme catalyses L-phenylalanine(in) = L-phenylalanine(out). It carries out the reaction L-tyrosine(in) = L-tyrosine(out). It catalyses the reaction L-tryptophan(in) = L-tryptophan(out). The catalysed reaction is L-threonine(in) = L-threonine(out). The enzyme catalyses L-methionine(in) = L-methionine(out). It carries out the reaction L-lysine(in) = L-lysine(out). It catalyses the reaction L-glutamate(out) = L-glutamate(in). The catalysed reaction is L-valine(in) = L-valine(out). The enzyme catalyses L-isoleucine(in) = L-isoleucine(out). Amino acid transporter with broad substrate specificity. Can transport various amino acids, including phenylalanine, tyrosine, tryptophan, L-threonine, L-methionine, L-lysine, L-glutamate, L-valine and L-isoleucine. Overexpression confers resistance to phenylalanine and increases export of phenylalanine, tyrosine and tryptophan. The sequence is that of Aromatic amino acid exporter YddG (yddG) from Escherichia coli (strain K12).